An 86-amino-acid polypeptide reads, in one-letter code: Alpha-toxin TbTx5 (86 aa).

The signal sequence occupies residues 1–19; that stretch reads MNDFVFLVVACLLTAGTEG. Residues 21 to 82 enclose the LCN-type CS-alpha/beta domain; the sequence is KDGYPVEGDN…EPTKTNGRCK (62 aa). 4 disulfide bridges follow: cysteine 31-cysteine 81, cysteine 35-cysteine 57, cysteine 43-cysteine 64, and cysteine 47-cysteine 66. Proline 83 carries the proline amide modification.

It belongs to the long (4 C-C) scorpion toxin superfamily. Sodium channel inhibitor family. Alpha subfamily. Expressed by the venom gland.

It localises to the secreted. Alpha toxins bind voltage-independently at site-3 of sodium channels (Nav) and inhibit the inactivation of the activated channels, thereby blocking neuronal transmission. This Tityus bahiensis (Brazilian scorpion) protein is Alpha-toxin TbTx5.